A 1052-amino-acid chain; its full sequence is Focal adhesion kinase 1 (1052 aa).

The tract at residues 1–27 (MAAAYLDPNLNHTPNSSTKTHLGTGME) is disordered. Alanine 2 carries the N-acetylalanine modification. Tyrosine 5 carries the post-translational modification Phosphotyrosine. Positions 10 to 21 (LNHTPNSSTKTH) are enriched in polar residues. Threonine 13 is modified (phosphothreonine). Phosphoserine is present on residues serine 29 and serine 54. The region spanning 35–355 (RVLKVFHYFE…GYCRLVNGTS (321 aa)) is the FERM domain. Lysine 152 participates in a covalent cross-link: Glycyl lysine isopeptide (Lys-Gly) (interchain with G-Cter in SUMO). Position 397 is a phosphotyrosine; by autocatalysis (tyrosine 397). Phosphotyrosine is present on tyrosine 407. The Protein kinase domain maps to 422 to 680 (IELGRCIGEG…ELKAQLSTIL (259 aa)). Residues 428 to 434 (IGEGQFG), lysine 454, and 500 to 502 (ELC) each bind ATP. Catalysis depends on aspartate 546, which acts as the Proton acceptor. A Phosphotyrosine modification is found at tyrosine 570. Tyrosine 576 and tyrosine 577 each carry phosphotyrosine; by RET and SRC. Residue serine 580 is modified to Phosphoserine. Basic and acidic residues predominate over residues 684-697 (KAQQEERMRMESRR). 2 disordered regions span residues 684–734 (KAQQ…PSPQ) and 839–922 (LSRG…RSND). The interaction with TGFB1I1 stretch occupies residues 707–1052 (GSDEAPPKPS…LKMLGQTRPH (346 aa)). Serine 722 is subject to Phosphoserine. Residue serine 732 is modified to Phosphoserine; by CDK5. Basic and acidic residues predominate over residues 839–849 (LSRGSIDREDG). The residue at position 843 (serine 843) is a Phosphoserine. Tyrosine 861 carries the post-translational modification Phosphotyrosine. Positions 869–880 (PAAPPKKPPRPG) are enriched in pro residues. 2 positions are modified to phosphoserine: serine 887 and serine 910. Residues 912-1052 (PPTANLDRSN…LKMLGQTRPH (141 aa)) are interaction with ARHGEF28. Threonine 914 is subject to Phosphothreonine. Phosphotyrosine is present on tyrosine 925.

The protein belongs to the protein kinase superfamily. Tyr protein kinase family. FAK subfamily. Interacts (via first Pro-rich region) with CAS family members (via SH3 domain), including BCAR1, BCAR3, and CASS4. Interacts with NEDD9 (via SH3 domain). Interacts with GIT1. Interacts with SORBS1. Interacts with ARHGEF28. Interacts with SHB. Part of a complex composed of THSD1, PTK2/FAK1, TLN1 and VCL. Interacts with PXN and TLN1. Interacts with STAT1. Interacts with DCC. Interacts with WASL. Interacts with ARHGEF7. Interacts with GRB2 and GRB7. Component of a complex that contains at least FER, CTTN and PTK2/FAK1. Interacts with BMX. Interacts with TGFB1I1. Interacts with STEAP4. Interacts with ZFYVE21. Interacts with ESR1. Interacts with PIK3R1 or PIK3R2. Interacts with SRC, FGR, FLT4 and RET. Interacts with EPHA2 in resting cells; activation of EPHA2 recruits PTPN11, leading to dephosphorylation of PTK2/FAK1 and dissociation of the complex. Interacts with EPHA1 (kinase activity-dependent). Interacts with CD4; this interaction requires the presence of HIV-1 gp120. Interacts with PIAS1. Interacts with ARHGAP26 and SHC1. Interacts with RB1CC1; this inhibits PTK2/FAK1 activity and activation of downstream signaling pathways. Interacts with P53/TP53 and MDM2. Interacts with LPXN (via LD motif 3). Interacts with MISP. Interacts with CIB1 isoform 2. Interacts with CD36. Interacts with EMP2; regulates PTK2 activation and localization. Interacts with DSCAM. Interacts with AMBRA1. Interacts (when tyrosine-phosphorylated) with tensin TNS1; the interaction is increased by phosphorylation of TNS1. In terms of processing, phosphorylated on tyrosine residues upon activation, e.g. upon integrin signaling. Tyr-397 is the major autophosphorylation site, but other kinases can also phosphorylate this residue. Phosphorylation at Tyr-397 promotes interaction with SRC and SRC family members, leading to phosphorylation at Tyr-576, Tyr-577 and at additional tyrosine residues. FGR promotes phosphorylation at Tyr-397 and Tyr-576. FER promotes phosphorylation at Tyr-577, Tyr-861 and Tyr-925, even when cells are not adherent. Tyr-397, Tyr-576 and Ser-722 are phosphorylated only when cells are adherent. Phosphorylation at Tyr-397 is important for interaction with BMX, PIK3R1 and SHC1. Phosphorylation at Tyr-925 is important for interaction with GRB2. Dephosphorylated by PTPN11; PTPN11 is recruited to PTK2 via EPHA2 (tyrosine phosphorylated). Microtubule-induced dephosphorylation at Tyr-397 is crucial for the induction of focal adhesion disassembly; this dephosphorylation could be catalyzed by PTPN11 and regulated by ZFYVE21. Phosphorylation on tyrosine residues is enhanced by NTN1. Post-translationally, sumoylated; this enhances autophosphorylation. In terms of tissue distribution, detected in B and T-lymphocytes. Isoform 1 and isoform 6 are detected in lung fibroblasts (at protein level). Ubiquitous. Expressed in epithelial cells (at protein level).

Its subcellular location is the cell junction. It is found in the focal adhesion. The protein localises to the cell membrane. The protein resides in the cytoplasm. It localises to the perinuclear region. Its subcellular location is the cell cortex. It is found in the cytoskeleton. The protein localises to the microtubule organizing center. The protein resides in the centrosome. It localises to the nucleus. Its subcellular location is the cilium basal body. The enzyme catalyses L-tyrosyl-[protein] + ATP = O-phospho-L-tyrosyl-[protein] + ADP + H(+). With respect to regulation, subject to autoinhibition, mediated by interactions between the FERM domain and the kinase domain. Activated by autophosphorylation at Tyr-397. This promotes interaction with SRC and phosphorylation at Tyr-576 and Tyr-577 in the kinase activation loop. Phosphorylation at Tyr-576 and Tyr-577 is required for maximal kinase activity. Inhibited by TAC544, TAE226, PF-573,228 and PF-562,271. Its function is as follows. Non-receptor protein-tyrosine kinase that plays an essential role in regulating cell migration, adhesion, spreading, reorganization of the actin cytoskeleton, formation and disassembly of focal adhesions and cell protrusions, cell cycle progression, cell proliferation and apoptosis. Required for early embryonic development and placenta development. Required for embryonic angiogenesis, normal cardiomyocyte migration and proliferation, and normal heart development. Regulates axon growth and neuronal cell migration, axon branching and synapse formation; required for normal development of the nervous system. Plays a role in osteogenesis and differentiation of osteoblasts. Functions in integrin signal transduction, but also in signaling downstream of numerous growth factor receptors, G-protein coupled receptors (GPCR), EPHA2, netrin receptors and LDL receptors. Forms multisubunit signaling complexes with SRC and SRC family members upon activation; this leads to the phosphorylation of additional tyrosine residues, creating binding sites for scaffold proteins, effectors and substrates. Regulates numerous signaling pathways. Promotes activation of phosphatidylinositol 3-kinase and the AKT1 signaling cascade. Promotes activation of MAPK1/ERK2, MAPK3/ERK1 and the MAP kinase signaling cascade. Promotes localized and transient activation of guanine nucleotide exchange factors (GEFs) and GTPase-activating proteins (GAPs), and thereby modulates the activity of Rho family GTPases. Signaling via CAS family members mediates activation of RAC1. Phosphorylates NEDD9 following integrin stimulation. Recruits the ubiquitin ligase MDM2 to P53/TP53 in the nucleus, and thereby regulates P53/TP53 activity, P53/TP53 ubiquitination and proteasomal degradation. Phosphorylates SRC; this increases SRC kinase activity. Phosphorylates ACTN1, ARHGEF7, GRB7, RET and WASL. Promotes phosphorylation of PXN and STAT1; most likely PXN and STAT1 are phosphorylated by a SRC family kinase that is recruited to autophosphorylated PTK2/FAK1, rather than by PTK2/FAK1 itself. Promotes phosphorylation of BCAR1; GIT2 and SHC1; this requires both SRC and PTK2/FAK1. Promotes phosphorylation of BMX and PIK3R1. Isoform 6 (FRNK) does not contain a kinase domain and inhibits PTK2/FAK1 phosphorylation and signaling. Its enhanced expression can attenuate the nuclear accumulation of LPXN and limit its ability to enhance serum response factor (SRF)-dependent gene transcription. Functionally, isoform 6 (FRNK) does not contain a kinase domain and inhibits PTK2/FAK1 phosphorylation and signaling. Its enhanced expression can attenuate the nuclear accumulation of LPXN and limit its ability to enhance serum response factor (SRF)-dependent gene transcription. The sequence is that of Focal adhesion kinase 1 from Homo sapiens (Human).